Here is a 193-residue protein sequence, read N- to C-terminus: ATP-dependent Clp protease proteolytic subunit (193 aa).

Catalysis depends on Ser-98, which acts as the Nucleophile. His-123 is a catalytic residue.

It belongs to the peptidase S14 family. Fourteen ClpP subunits assemble into 2 heptameric rings which stack back to back to give a disk-like structure with a central cavity, resembling the structure of eukaryotic proteasomes.

It is found in the cytoplasm. The catalysed reaction is Hydrolysis of proteins to small peptides in the presence of ATP and magnesium. alpha-casein is the usual test substrate. In the absence of ATP, only oligopeptides shorter than five residues are hydrolyzed (such as succinyl-Leu-Tyr-|-NHMec, and Leu-Tyr-Leu-|-Tyr-Trp, in which cleavage of the -Tyr-|-Leu- and -Tyr-|-Trp bonds also occurs).. Cleaves peptides in various proteins in a process that requires ATP hydrolysis. Has a chymotrypsin-like activity. Plays a major role in the degradation of misfolded proteins. ClpXP is involved in the complete degradation of the Site-2 clipped anti-sigma-W factor RsiW. This results in the release of SigW and the transcription activation of the genes under the control of the sigma-W factor. The chain is ATP-dependent Clp protease proteolytic subunit from Oceanobacillus iheyensis (strain DSM 14371 / CIP 107618 / JCM 11309 / KCTC 3954 / HTE831).